A 759-amino-acid polypeptide reads, in one-letter code: DNA replication licensing factor mcm-5 (759 aa).

An MCM domain is found at 330–536 (AYELIAKSIA…KDATLAKHVI (207 aa)). Position 370 (Arg370) interacts with ADP. Residues 511–514 (SRFD) carry the Arginine finger motif.

The protein belongs to the MCM family. Component of the mcm2-7 complex. The complex forms a toroidal hexameric ring with the proposed subunit order mcm2-mcm6-mcm4-mcm7-mcm3-mcm5 (By simililarity).

The protein resides in the nucleus. It localises to the cytoplasm. Its subcellular location is the cytosol. It catalyses the reaction ATP + H2O = ADP + phosphate + H(+). In terms of biological role, acts as a component of the MCM2-7 complex (MCM complex) which is the replicative helicase essential for 'once per cell cycle' DNA replication initiation and elongation in eukaryotic cells. Core component of CDC45-MCM-GINS (CMG) helicase, the molecular machine that unwinds template DNA during replication, and around which the replisome is built. The active ATPase sites in the MCM2-7 ring are formed through the interaction surfaces of two neighboring subunits such that a critical structure of a conserved arginine finger motif is provided in trans relative to the ATP-binding site of the Walker A box of the adjacent subunit. The six ATPase active sites, however, are likely to contribute differentially to the complex helicase activity. This is DNA replication licensing factor mcm-5 (mcm-5) from Caenorhabditis elegans.